We begin with the raw amino-acid sequence, 524 residues long: Phosphoenolpyruvate carboxykinase (ATP) (524 aa).

3 residues coordinate substrate: Arg-52, Tyr-188, and Lys-194. ATP-binding positions include Lys-194, His-213, and 229-237 (GLSGTGKTT). Residues Lys-194 and His-213 each coordinate Mn(2+). Residue Asp-250 participates in Mn(2+) binding. ATP is bound by residues Glu-278, Arg-314, and Thr-439. A substrate-binding site is contributed by Arg-314.

Belongs to the phosphoenolpyruvate carboxykinase (ATP) family. Mn(2+) serves as cofactor.

The protein resides in the cytoplasm. The enzyme catalyses oxaloacetate + ATP = phosphoenolpyruvate + ADP + CO2. It participates in carbohydrate biosynthesis; gluconeogenesis. Involved in the gluconeogenesis. Catalyzes the conversion of oxaloacetate (OAA) to phosphoenolpyruvate (PEP) through direct phosphoryl transfer between the nucleoside triphosphate and OAA. This is Phosphoenolpyruvate carboxykinase (ATP) from Campylobacter lari (strain RM2100 / D67 / ATCC BAA-1060).